The following is a 1242-amino-acid chain: ATP-dependent helicase/nuclease subunit A (1242 aa).

The UvrD-like helicase ATP-binding domain maps to 13–486; sequence SQWTDDQWKA…IDLAKNFRSR (474 aa). 34 to 41 contributes to the ATP binding site; that stretch reads AAAGSGKT. The region spanning 506-806 is the UvrD-like helicase C-terminal domain; the sequence is GEIEYDADAE…RIMTIHKSKG (301 aa).

This sequence belongs to the helicase family. AddA subfamily. As to quaternary structure, heterodimer of AddA and AddB/RexB. The cofactor is Mg(2+).

It carries out the reaction Couples ATP hydrolysis with the unwinding of duplex DNA by translocating in the 3'-5' direction.. The enzyme catalyses ATP + H2O = ADP + phosphate + H(+). Functionally, the heterodimer acts as both an ATP-dependent DNA helicase and an ATP-dependent, dual-direction single-stranded exonuclease. Recognizes the chi site generating a DNA molecule suitable for the initiation of homologous recombination. The AddA nuclease domain is required for chi fragment generation; this subunit has the helicase and 3' -&gt; 5' nuclease activities. The polypeptide is ATP-dependent helicase/nuclease subunit A (Bacillus cytotoxicus (strain DSM 22905 / CIP 110041 / 391-98 / NVH 391-98)).